The chain runs to 439 residues: 23S rRNA (uracil(1939)-C(5))-methyltransferase RlmD (439 aa).

The TRAM domain occupies 10 to 68; the sequence is QKKLRAAFTTIVQDLDYQGLGVAKIQGKTWFIENALPQEQVQVQVIEEKRQYGLGRVQK. [4Fe-4S] cluster contacts are provided by Cys81, Cys87, Cys90, and Cys168. Gln271, Phe300, Asn305, Glu321, Asp348, and Asp369 together coordinate S-adenosyl-L-methionine. Cys395 (nucleophile) is an active-site residue.

This sequence belongs to the class I-like SAM-binding methyltransferase superfamily. RNA M5U methyltransferase family. RlmD subfamily.

The catalysed reaction is uridine(1939) in 23S rRNA + S-adenosyl-L-methionine = 5-methyluridine(1939) in 23S rRNA + S-adenosyl-L-homocysteine + H(+). In terms of biological role, catalyzes the formation of 5-methyl-uridine at position 1939 (m5U1939) in 23S rRNA. This Histophilus somni (strain 129Pt) (Haemophilus somnus) protein is 23S rRNA (uracil(1939)-C(5))-methyltransferase RlmD.